The following is a 587-amino-acid chain: Probable pectinesterase/pectinesterase inhibitor 61 (587 aa).

The disordered stretch occupies residues 1 to 23; the sequence is MGYDRLGPSGPSNPNQKDPATSL. A compositionally biased stretch (polar residues) spans 10–19; sequence GPSNPNQKDP. Residues 35 to 55 traverse the membrane as a helical segment; it reads ILFTLAVLVVGVVCFGIFAGI. The pectinesterase inhibitor 61 stretch occupies residues 69–223; that stretch reads RKPTQAISRT…SEMVSNCLAI (155 aa). The segment at 273-571 is pectinesterase 61; sequence DITVSKDGSG…FTVAQFISGS (299 aa). Substrate-binding residues include Thr-349 and Gln-379. Asp-402 (proton donor; for pectinesterase activity) is an active-site residue. An intrachain disulfide couples Cys-416 to Cys-436. Asp-423 serves as the catalytic Nucleophile; for pectinesterase activity. 2 residues coordinate substrate: Arg-491 and Trp-493.

It in the N-terminal section; belongs to the PMEI family. This sequence in the C-terminal section; belongs to the pectinesterase family. Expressed in siliques, floral stems and rosettes leaves.

It is found in the membrane. It carries out the reaction [(1-&gt;4)-alpha-D-galacturonosyl methyl ester](n) + n H2O = [(1-&gt;4)-alpha-D-galacturonosyl](n) + n methanol + n H(+). Its pathway is glycan metabolism; pectin degradation; 2-dehydro-3-deoxy-D-gluconate from pectin: step 1/5. In terms of biological role, acts in the modification of cell walls via demethylesterification of cell wall pectin. This chain is Probable pectinesterase/pectinesterase inhibitor 61 (PME61), found in Arabidopsis thaliana (Mouse-ear cress).